The primary structure comprises 95 residues: Microcin E492 immunity protein (95 aa).

3 helical membrane passes run methionine 1–isoleucine 21, valine 35–tyrosine 55, and tyrosine 67–isoleucine 87.

Belongs to the MceB microcin immunity protein family.

The protein localises to the cell inner membrane. In terms of biological role, protect the producing cell against microcin E492. The sequence is that of Microcin E492 immunity protein from Klebsiella pneumoniae.